The primary structure comprises 197 residues: Imidazoleglycerol-phosphate dehydratase (197 aa).

This sequence belongs to the imidazoleglycerol-phosphate dehydratase family.

Its subcellular location is the cytoplasm. The enzyme catalyses D-erythro-1-(imidazol-4-yl)glycerol 3-phosphate = 3-(imidazol-4-yl)-2-oxopropyl phosphate + H2O. It participates in amino-acid biosynthesis; L-histidine biosynthesis; L-histidine from 5-phospho-alpha-D-ribose 1-diphosphate: step 6/9. The sequence is that of Imidazoleglycerol-phosphate dehydratase from Hahella chejuensis (strain KCTC 2396).